A 201-amino-acid polypeptide reads, in one-letter code: ATP-dependent Clp protease proteolytic subunit (201 aa).

The active-site Nucleophile is S98. Residue H123 is part of the active site.

The protein belongs to the peptidase S14 family. As to quaternary structure, fourteen ClpP subunits assemble into 2 heptameric rings which stack back to back to give a disk-like structure with a central cavity, resembling the structure of eukaryotic proteasomes.

The protein localises to the cytoplasm. It carries out the reaction Hydrolysis of proteins to small peptides in the presence of ATP and magnesium. alpha-casein is the usual test substrate. In the absence of ATP, only oligopeptides shorter than five residues are hydrolyzed (such as succinyl-Leu-Tyr-|-NHMec, and Leu-Tyr-Leu-|-Tyr-Trp, in which cleavage of the -Tyr-|-Leu- and -Tyr-|-Trp bonds also occurs).. Functionally, cleaves peptides in various proteins in a process that requires ATP hydrolysis. Has a chymotrypsin-like activity. Plays a major role in the degradation of misfolded proteins. The chain is ATP-dependent Clp protease proteolytic subunit from Rickettsia canadensis (strain McKiel).